A 157-amino-acid chain; its full sequence is uncharacterized protein (157 aa).

An N-acetyltransferase domain is found at 9–154 (LLINYKTLDE…ETNLNAVTNE (146 aa)).

This is an uncharacterized protein from Bacillus cereus (strain ATCC 14579 / DSM 31 / CCUG 7414 / JCM 2152 / NBRC 15305 / NCIMB 9373 / NCTC 2599 / NRRL B-3711).